Here is a 227-residue protein sequence, read N- to C-terminus: Protein CAP22 (227 aa).

Residues asparagine 55 and asparagine 72 are each glycosylated (N-linked (GlcNAc...) asparagine). The segment at 143–162 (TTIGGGATPAPTSERSRTSD) is disordered.

Its subcellular location is the secreted. It is found in the cell wall. In Colletotrichum gloeosporioides (Anthracnose fungus), this protein is Protein CAP22 (CAP22).